Here is a 507-residue protein sequence, read N- to C-terminus: Type II methyltransferase M.PstI (507 aa).

It belongs to the N(4)/N(6)-methyltransferase family. In terms of assembly, monomer.

The enzyme catalyses a 2'-deoxyadenosine in DNA + S-adenosyl-L-methionine = an N(6)-methyl-2'-deoxyadenosine in DNA + S-adenosyl-L-homocysteine + H(+). In terms of biological role, a gamma subtype methylase that recognizes the double-stranded sequence 5'-CTGCAG-3', methylates A-5 on both strands, and protects the DNA from cleavage by the PstI endonuclease. This is Type II methyltransferase M.PstI (pstIM) from Providencia stuartii.